Consider the following 29-residue polypeptide: Cuticle protein 36 (29 aa).

Component of the cuticle of migratory locust which contains more than 100 different structural proteins. This chain is Cuticle protein 36, found in Locusta migratoria (Migratory locust).